The following is a 384-amino-acid chain: 1-deoxy-D-xylulose 5-phosphate reductoisomerase (384 aa).

The NADPH site is built by Thr10, Gly11, Ser12, Ile13, Arg37, Asn38, and Asn124. Residue Lys125 participates in 1-deoxy-D-xylulose 5-phosphate binding. Glu126 contributes to the NADPH binding site. Asp150 is a Mn(2+) binding site. 1-deoxy-D-xylulose 5-phosphate is bound by residues Ser151, Glu152, Ser176, and His199. Residue Glu152 participates in Mn(2+) binding. An NADPH-binding site is contributed by Gly205. Ser212, Asn217, Lys218, and Glu221 together coordinate 1-deoxy-D-xylulose 5-phosphate. Position 221 (Glu221) interacts with Mn(2+).

Belongs to the DXR family. Mg(2+) serves as cofactor. Mn(2+) is required as a cofactor.

The enzyme catalyses 2-C-methyl-D-erythritol 4-phosphate + NADP(+) = 1-deoxy-D-xylulose 5-phosphate + NADPH + H(+). The protein operates within isoprenoid biosynthesis; isopentenyl diphosphate biosynthesis via DXP pathway; isopentenyl diphosphate from 1-deoxy-D-xylulose 5-phosphate: step 1/6. Functionally, catalyzes the NADPH-dependent rearrangement and reduction of 1-deoxy-D-xylulose-5-phosphate (DXP) to 2-C-methyl-D-erythritol 4-phosphate (MEP). This Clostridium perfringens (strain 13 / Type A) protein is 1-deoxy-D-xylulose 5-phosphate reductoisomerase.